A 129-amino-acid chain; its full sequence is Small ribosomal subunit protein uS11 (129 aa).

It belongs to the universal ribosomal protein uS11 family. In terms of assembly, part of the 30S ribosomal subunit. Interacts with proteins S7 and S18. Binds to IF-3.

Its function is as follows. Located on the platform of the 30S subunit, it bridges several disparate RNA helices of the 16S rRNA. Forms part of the Shine-Dalgarno cleft in the 70S ribosome. This is Small ribosomal subunit protein uS11 from Bacillus mycoides (strain KBAB4) (Bacillus weihenstephanensis).